The following is a 259-amino-acid chain: MELLAKTRKLNALLQSAAGKPVNFREMSDTMCEVIEANVFVVSRRGKLLGYAIHQQIENERMKQMLAERQFPEEYTQSLFNITETSSNLDVNSAYTAFPVENKELFGQGLTTIVPIVGGGERLGTLVLARLGQEFLDDDLILAEYSSTVVGMEILREKAEEIEEEARSKAVVQMAISSLSYSELEAIEHIFEELNGTEGLLVASKIADRVGITRSVIVNALRKLESAGVIESRSLGMKGTYIKVLNDKFLHELAXLKTN.

The tract at residues 1 to 155 (MELLAKTRKL…SSTVVGMEIL (155 aa)) is GAF domain. The segment at residues 203–222 (ASKIADRVGITRSVIVNALR) is a DNA-binding region (H-T-H motif). A Phosphoserine modification is found at Ser-215.

This sequence belongs to the CodY family.

It is found in the cytoplasm. Its function is as follows. DNA-binding global transcriptional regulator which is involved in the adaptive response to starvation and acts by directly or indirectly controlling the expression of numerous genes in response to nutrient availability. During rapid exponential growth, CodY is highly active and represses genes whose products allow adaptation to nutrient depletion. This is Global transcriptional regulator CodY from Bacillus cereus (strain ATCC 10987 / NRS 248).